Reading from the N-terminus, the 405-residue chain is Diaminopimelate decarboxylase (405 aa).

Lysine 46 bears the N6-(pyridoxal phosphate)lysine mark. Pyridoxal 5'-phosphate contacts are provided by residues glycine 225 and 259 to 262; that span reads EPGR. Substrate-binding residues include arginine 262, arginine 298, and tyrosine 302. The active-site Proton donor is cysteine 329. Substrate contacts are provided by glutamate 330 and tyrosine 358. Pyridoxal 5'-phosphate is bound at residue tyrosine 358.

It belongs to the Orn/Lys/Arg decarboxylase class-II family. LysA subfamily. Homodimer. Requires pyridoxal 5'-phosphate as cofactor.

It carries out the reaction meso-2,6-diaminopimelate + H(+) = L-lysine + CO2. Its pathway is amino-acid biosynthesis; L-lysine biosynthesis via DAP pathway; L-lysine from DL-2,6-diaminopimelate: step 1/1. Its function is as follows. Specifically catalyzes the decarboxylation of meso-diaminopimelate (meso-DAP) to L-lysine. In Helicobacter pylori (strain J99 / ATCC 700824) (Campylobacter pylori J99), this protein is Diaminopimelate decarboxylase.